The primary structure comprises 216 residues: MYKGIFVTATDTEVGKTYVSCKIAETLEKSGINTGVFKPVSTGNRNDAKALIKAAKIDENTETVTPVFFKNPMSPYGASLLERRASDKIFDLKKINNAFKYFLNKYEFTVVEGVGGILVPLKQNFFVSDLIKKFNLPVIVVARFGLGTLNHTLLTVEKLKRDRQKILGVILSGKKNNNDVSVKSNALIIKKITNLSVLELGYNEKIDLEKNIWIIK.

Position 13 to 18 (13 to 18) interacts with ATP; sequence EVGKTY. Position 17 (T17) interacts with Mg(2+). K38 is a catalytic residue. Substrate is bound at residue T42. Residues D47 and 112 to 115 contribute to the ATP site; that span reads EGVG. Residues D47 and E112 each contribute to the Mg(2+) site.

The protein belongs to the dethiobiotin synthetase family. In terms of assembly, homodimer. Mg(2+) serves as cofactor.

Its subcellular location is the cytoplasm. The catalysed reaction is (7R,8S)-7,8-diammoniononanoate + CO2 + ATP = (4R,5S)-dethiobiotin + ADP + phosphate + 3 H(+). It participates in cofactor biosynthesis; biotin biosynthesis; biotin from 7,8-diaminononanoate: step 1/2. Functionally, catalyzes a mechanistically unusual reaction, the ATP-dependent insertion of CO2 between the N7 and N8 nitrogen atoms of 7,8-diaminopelargonic acid (DAPA, also called 7,8-diammoniononanoate) to form a ureido ring. This Endomicrobium trichonymphae protein is ATP-dependent dethiobiotin synthetase BioD.